The chain runs to 32 residues: U21-ctenitoxin-Co1a (32 aa).

3 cysteine pairs are disulfide-bonded: cysteine 3–cysteine 17, cysteine 10–cysteine 21, and cysteine 16–cysteine 30.

In terms of tissue distribution, expressed by the venom gland.

Its subcellular location is the secreted. In terms of biological role, not toxic to mice by intracerebroventricular injection. This Ctenus ornatus (Brazilian spider) protein is U21-ctenitoxin-Co1a.